Reading from the N-terminus, the 91-residue chain is Small ribosomal subunit protein uS19 (91 aa).

The protein belongs to the universal ribosomal protein uS19 family.

Protein S19 forms a complex with S13 that binds strongly to the 16S ribosomal RNA. In Actinobacillus pleuropneumoniae serotype 7 (strain AP76), this protein is Small ribosomal subunit protein uS19.